Here is a 285-residue protein sequence, read N- to C-terminus: Phycobilisome 31.6 kDa linker polypeptide, phycocyanin-associated, rod (285 aa).

In terms of domain architecture, PBS-linker spans 1–180 (MPITTAASRL…LYRGYATSDR (180 aa)).

This sequence belongs to the phycobilisome linker protein family.

It localises to the cellular thylakoid membrane. Its function is as follows. Rod linker protein, associated with phycocyanin. Linker polypeptides determine the state of aggregation and the location of the disk-shaped phycobiliprotein units within the phycobilisome and modulate their spectroscopic properties in order to mediate a directed and optimal energy transfer. The protein is Phycobilisome 31.6 kDa linker polypeptide, phycocyanin-associated, rod (cpcI3) of Microchaete diplosiphon (Fremyella diplosiphon).